The primary structure comprises 354 residues: MMITRGGAKAAKSLLVAAGPRLFSTVRTVSSHEALSASHILKPGVTSAWIWTRAPTIGGMRFASTITLGEKTPMKEEDANQKKTENESTGGDAAGGNNKGDKGIASYWGVEPNKITKEDGSEWKWNCFRPWETYKADITIDLKKHHVPTTFLDRIAYWTVKSLRWPTDLFFQRRYGCRAMMLETVAAVPGMVGGMLLHCKSLRRFEQSGGWIKALLEEAENERMHLMTFMEVAKPKWYERALVITVQGVFFNAYFLGYLISPKFAHRMVGYLEEEAIHSYTEFLKELDKGNIENVPAPAIAIDYWRLPADATLRDVVMVVRADEAHHRDVNHFASDIHYQGRELKEAPAPIGYH.

A mitochondrion-targeting transit peptide spans 1 to 62 (MMITRGGAKA…RAPTIGGMRF (62 aa)). The segment at 68–99 (LGEKTPMKEEDANQKKTENESTGGDAAGGNNK) is disordered. A compositionally biased stretch (basic and acidic residues) spans 72 to 86 (TPMKEEDANQKKTEN). Residues 179–199 (AMMLETVAAVPGMVGGMLLHC) traverse the membrane as a helical segment. Residues Glu-183, Glu-222, and His-225 each coordinate Fe cation. A helical membrane pass occupies residues 241–261 (ALVITVQGVFFNAYFLGYLIS). Residues Glu-273, Glu-324, and His-327 each coordinate Fe cation.

It belongs to the alternative oxidase family. As to quaternary structure, homodimer; disulfide-linked. Fe cation serves as cofactor. Expressed in roots, stems, cotyledons, leaves and flowers. High expression in sepals.

Its subcellular location is the mitochondrion inner membrane. It catalyses the reaction 2 a ubiquinol + O2 = 2 a ubiquinone + 2 H2O. When the two monomeric subunits are covalently linked by a S-S bond, the enzyme is essentially inactive. When the disulfide bond is reduced, its component sulfhydryls can associate with K-keto acids through formation of a thiohemiacetal, resulting in enzyme activation. Activated by glyoxylate, irrespective to the substitution found at Cys-127. That suggests the presence of a second activation site, possibly Cys-177. Its function is as follows. Catalyzes the cyanide-resistant oxidation of ubiquinol and the reduction of molecular oxygen to water, but does not translocate protons and consequently is not linked to oxidative phosphorylation. Increases respiration when the cytochrome respiratory pathway is restricted, or in response to low temperatures. The polypeptide is Ubiquinol oxidase 1a, mitochondrial (AOX1A) (Arabidopsis thaliana (Mouse-ear cress)).